A 283-amino-acid chain; its full sequence is Putative transcription factor kapC (283 aa).

The segment covering 1-10 (MQPTLAPAPH) has biased composition (pro residues). Residues 1 to 121 (MQPTLAPAPH…NRAAQRAFRQ (121 aa)) form a disordered region. Residues 26–42 (HDQLLAAHQHLSHPQQA) are compositionally biased toward low complexity. Positions 55–67 (QPNTTSPRDQNNI) are enriched in polar residues. The bZIP domain maps to 102-165 (PLSTSKRAAQ…EYIINLQSRL (64 aa)). The basic motif stretch occupies residues 103–126 (LSTSKRAAQNRAAQRAFRQRKESY). Over residues 108 to 118 (RAAQNRAAQRA) the composition is skewed to low complexity. The tract at residues 130 to 161 (LEEQVKEFDNTNETMKQLQAENYQLREYIINL) is leucine-zipper. The segment at 178-283 (NIDLNQPRND…EPGHGLPVVS (106 aa)) is disordered.

The protein belongs to the bZIP family.

It localises to the nucleus. In terms of biological role, putative transcription factor. The chain is Putative transcription factor kapC (kapC) from Aspergillus niger (strain ATCC MYA-4892 / CBS 513.88 / FGSC A1513).